The following is a 221-amino-acid chain: Probable glutathione S-transferase parC (221 aa).

The region spanning 4 to 83 (EEVILLDFWP…YIEEVWKDKA (80 aa)) is the GST N-terminal domain. Glutathione contacts are provided by residues S14, K41, I55, and 67–68 (ES). One can recognise a GST C-terminal domain in the interval 90-214 (DPYDRAQARF…PKVLEFVKVL (125 aa)).

Belongs to the GST superfamily. Phi family. Abundant in seedlings and roots. It is also found in the shoot tips, flowers and leaves.

It carries out the reaction RX + glutathione = an S-substituted glutathione + a halide anion + H(+). Functionally, conjugation of reduced glutathione to a wide number of exogenous and endogenous hydrophobic electrophiles. The polypeptide is Probable glutathione S-transferase parC (PARC) (Nicotiana tabacum (Common tobacco)).